The following is a 218-amino-acid chain: uncharacterized protein (218 aa).

A run of 5 helical transmembrane segments spans residues I28–L48, F66–L86, L92–L112, M122–C142, and I173–F193.

The protein localises to the cell membrane. This is an uncharacterized protein from Haemophilus influenzae (strain ATCC 51907 / DSM 11121 / KW20 / Rd).